The primary structure comprises 65 residues: Small ribosomal subunit protein bS21 (65 aa).

Basic and acidic residues predominate over residues 33–42 (RRREHYEKPS). Positions 33 to 65 (RRREHYEKPSVKRKRKEAARLRKLQKMAREANN) are disordered. The span at 43–58 (VKRKRKEAARLRKLQK) shows a compositional bias: basic residues.

It belongs to the bacterial ribosomal protein bS21 family.

The chain is Small ribosomal subunit protein bS21 from Herpetosiphon aurantiacus (strain ATCC 23779 / DSM 785 / 114-95).